The primary structure comprises 346 residues: Peroxidase 9 (346 aa).

The N-terminal stretch at 1 to 23 (MAISKLIPTLVLFVLFSFDVSVA) is a signal peptide. Disulfide bonds link Cys54-Cys134, Cys87-Cys92, Cys140-Cys342, and Cys219-Cys251. His85 serves as the catalytic Proton acceptor. The Ca(2+) site is built by Asp86, Val89, Gly91, Asp93, and Ser95. Pro182 serves as a coordination point for substrate. N-linked (GlcNAc...) asparagine glycosylation occurs at Asn185. Position 212 (His212) interacts with heme b. Thr213 contacts Ca(2+). Ca(2+)-binding residues include Asp264, Ser267, and Asp272.

This sequence belongs to the peroxidase family. Classical plant (class III) peroxidase subfamily. Heme b is required as a cofactor. The cofactor is Ca(2+).

It is found in the secreted. The enzyme catalyses 2 a phenolic donor + H2O2 = 2 a phenolic radical donor + 2 H2O. Functionally, removal of H(2)O(2), oxidation of toxic reductants, biosynthesis and degradation of lignin, suberization, auxin catabolism, response to environmental stresses such as wounding, pathogen attack and oxidative stress. These functions might be dependent on each isozyme/isoform in each plant tissue. This chain is Peroxidase 9 (PER9), found in Arabidopsis thaliana (Mouse-ear cress).